We begin with the raw amino-acid sequence, 119 residues long: Large ribosomal subunit protein bL20 (119 aa).

This sequence belongs to the bacterial ribosomal protein bL20 family.

Functionally, binds directly to 23S ribosomal RNA and is necessary for the in vitro assembly process of the 50S ribosomal subunit. It is not involved in the protein synthesizing functions of that subunit. The polypeptide is Large ribosomal subunit protein bL20 (Sorangium cellulosum (strain So ce56) (Polyangium cellulosum (strain So ce56))).